A 564-amino-acid chain; its full sequence is Urocanate hydratase (564 aa).

Residues 58–59 (GG), Gln136, 182–184 (GMG), Glu202, Arg207, 248–249 (NA), 269–273 (QTSAH), 279–280 (YL), and Tyr328 each bind NAD(+). Cys416 is an active-site residue. Gly498 serves as a coordination point for NAD(+).

Belongs to the urocanase family. It depends on NAD(+) as a cofactor.

It is found in the cytoplasm. It catalyses the reaction 4-imidazolone-5-propanoate = trans-urocanate + H2O. The protein operates within amino-acid degradation; L-histidine degradation into L-glutamate; N-formimidoyl-L-glutamate from L-histidine: step 2/3. Catalyzes the conversion of urocanate to 4-imidazolone-5-propionate. The chain is Urocanate hydratase from Aliivibrio salmonicida (strain LFI1238) (Vibrio salmonicida (strain LFI1238)).